A 305-amino-acid chain; its full sequence is Cyclin-dependent kinase 3 (305 aa).

The Protein kinase domain maps to 4–286 (FQKVEKIGEG…AKTALAHPYF (283 aa)). ATP contacts are provided by residues 10-18 (IGEGTYGVV) and Lys33. Asp127 serves as the catalytic Proton acceptor.

Belongs to the protein kinase superfamily. CMGC Ser/Thr protein kinase family. CDC2/CDKX subfamily. Interacts with CABLES1 and CABLES2. Interacts with ATF1. Binding to CCNC/cyclin-C promotes RB1 phosphorylation. In terms of tissue distribution, expressed in cancer cell lines and glioblastoma tissue.

It catalyses the reaction L-seryl-[protein] + ATP = O-phospho-L-seryl-[protein] + ADP + H(+). The enzyme catalyses L-threonyl-[protein] + ATP = O-phospho-L-threonyl-[protein] + ADP + H(+). Functionally, serine/threonine-protein kinase that plays a critical role in the control of the eukaryotic cell cycle; involved in G0-G1 and G1-S cell cycle transitions. Interacts with CCNC/cyclin-C during interphase. Phosphorylates histone H1, ATF1, RB1 and CABLES1. ATF1 phosphorylation triggers ATF1 transactivation and transcriptional activities, and promotes cell proliferation and transformation. CDK3/cyclin-C mediated RB1 phosphorylation is required for G0-G1 transition. Promotes G1-S transition probably by contributing to the activation of E2F1, E2F2 and E2F3 in a RB1-independent manner. This chain is Cyclin-dependent kinase 3 (CDK3), found in Homo sapiens (Human).